Here is an 853-residue protein sequence, read N- to C-terminus: Putative dipeptidyl aminopeptidase C14C4.15c (853 aa).

The tract at residues 1–26 (MNAYEGDTLNNHGKSSTRQHWRKRSA) is disordered. Topologically, residues 1-65 (MNAYEGDTLN…AKKRRRKKHR (65 aa)) are cytoplasmic. The span at 15 to 25 (SSTRQHWRKRS) shows a compositional bias: basic residues. A helical; Signal-anchor for type II membrane protein membrane pass occupies residues 66 to 86 (YIYLAVCLFFLASVLSCAIIF). Residues 87-853 (RFYLHTNREN…SGHFHHALYC (767 aa)) are Lumenal-facing. Residues Asn96, Asn102, Asn472, Asn483, and Asn613 are each glycosylated (N-linked (GlcNAc...) asparagine). Active-site charge relay system residues include Ser719, Asp795, and His828.

It belongs to the peptidase S9B family.

It is found in the vacuole membrane. In Schizosaccharomyces pombe (strain 972 / ATCC 24843) (Fission yeast), this protein is Putative dipeptidyl aminopeptidase C14C4.15c.